The chain runs to 430 residues: Glutamate-1-semialdehyde 2,1-aminomutase (430 aa).

An N6-(pyridoxal phosphate)lysine modification is found at Lys270.

The protein belongs to the class-III pyridoxal-phosphate-dependent aminotransferase family. HemL subfamily. Homodimer. The cofactor is pyridoxal 5'-phosphate.

The protein localises to the cytoplasm. It carries out the reaction (S)-4-amino-5-oxopentanoate = 5-aminolevulinate. Its pathway is porphyrin-containing compound metabolism; protoporphyrin-IX biosynthesis; 5-aminolevulinate from L-glutamyl-tRNA(Glu): step 2/2. The sequence is that of Glutamate-1-semialdehyde 2,1-aminomutase from Cupriavidus necator (strain ATCC 17699 / DSM 428 / KCTC 22496 / NCIMB 10442 / H16 / Stanier 337) (Ralstonia eutropha).